Here is a 963-residue protein sequence, read N- to C-terminus: MGLPEPGPLRLLALLLLLLLLLLLQLQHLAAAAADPLLGGQGPAKDCEKDQFQCRNERCIPSVWRCDEDDDCLDHSDEDDCPKKTCADSDFTCDNGHCIHERWKCDGEEECPDGSDESEATCTKQVCPAEKLSCGPTSHKCVPASWRCDGEKDCEGGADEAGCATLCAPHEFQCGNRSCLAAVFVCDGDDDCGDGSDERGCADPACGPREFRCGGDGGGACIPERWVCDRQFDCEDRSDEAAELCGRPGPGATSAPAACATASQFACRSGECVHLGWRCDGDRDCKDKSDEADCPLGTCRGDEFQCGDGTCVLAIKHCNQEQDCPDGSDEAGCLQGLNECLHNNGGCSHICTDLKIGFECTCPAGFQLLDQKTCGDIDECKDPDACSQICVNYKGYFKCECYPGYEMDLLTKNCKAAAGKSPSLIFTNRHEVRRIDLVKRNYSRLIPMLKNVVALDVEVATNRIYWCDLSYRKIYSAYMDKASDPKEQEVLIDEQLHSPEGLAVDWVHKHIYWTDSGNKTISVATVDGGRRRTLFSRNLSEPRAIAVDPLRGFMYWSDWGDQAKIEKSGLNGVDRQTLVSDNIEWPNGITLDLLSQRLYWVDSKLHQLSSIDFSGGNRKTLISSTDFLSHPFGIAVFEDKVFWTDLENEAIFSANRLNGLEISILAENLNNPHDIVIFHELKQPRAPDACELSVQPNGGCEYLCLPAPQISSHSPKYTCACPDTMWLGPDMKRCYRAPQSTSTTTLASTMTRTVPATTRAPGTTVHRSTYQNHSTETPSLTAAVPSSVSVPRAPSISPSTLSPATSNHSQHYANEDSKMGSTVTAAVIGIIVPIVVIALLCMSGYLIWRNWKRKNTKSMNFDNPVYRKTTEEEDEDELHIGRTAQIGHVYPAAISSFDRPLWAEPCLGETREPEDPAPALKELFVLPGEPRSQLHQLPKNPLSELPVVKSKRVALSLEDDGLP.

Positions 1–32 are cleaved as a signal peptide; that stretch reads MGLPEPGPLRLLALLLLLLLLLLLQLQHLAAA. The Extracellular portion of the chain corresponds to 42-826; the sequence is GPAKDCEKDQ…SKMGSTVTAA (785 aa). LDL-receptor class A domains follow at residues 46 to 82, 85 to 123, 126 to 164, 166 to 202, 205 to 246, 258 to 295, and 298 to 334; these read DCEKDQFQCRNERCIPSVWRCDEDDDCLDHSDEDDCP, TCADSDFTCDNGHCIHERWKCDGEEECPDGSDESEATCT, VCPAEKLSCGPTSHKCVPASWRCDGEKDCEGGADEAGCA, LCAPHEFQCGNRSCLAAVFVCDGDDDCGDGSDERGCA, ACGP…ELCG, ACATASQFACRSGECVHLGWRCDGDRDCKDKSDEADCP, and TCRGDEFQCGDGTCVLAIKHCNQEQDCPDGSDEAGCL. 27 disulfides stabilise this stretch: C47/C59, C54/C72, C66/C81, C86/C98, C93/C111, C105/C122, C127/C141, C134/C154, C148/C163, C167/C179, C174/C192, C186/C201, C206/C221, C213/C234, C228/C245, C259/C272, C267/C285, C279/C294, C299/C311, C306/C324, C318/C333, C340/C351, C347/C360, C362/C374, C380/C390, C386/C399, and C401/C414. Ca(2+)-binding residues include W64, D67, D69, D71, D77, and E78. N-linked (GlcNAc...) asparagine glycosylation occurs at N176. Residues 336-375 form the EGF-like 1 domain; that stretch reads GLNECLHNNGGCSHICTDLKIGFECTCPAGFQLLDQKTCG. In terms of domain architecture, EGF-like 2; calcium-binding spans 376–415; the sequence is DIDECKDPDACSQICVNYKGYFKCECYPGYEMDLLTKNCK. N-linked (GlcNAc...) asparagine glycosylation is present at N441. 5 LDL-receptor class B repeats span residues 462–508, 509–551, 552–595, 596–639, and 640–681; these read NRIY…DWVH, KHIY…DPLR, GFMY…DLLS, QRLY…VFED, and KVFW…FHEL. N-linked (GlcNAc...) asparagine glycosylation is found at N518 and N538. The interval 740-798 is clustered O-linked oligosaccharides; sequence STSTTTLASTMTRTVPATTRAPGTTVHRSTYQNHSTETPSLTAAVPSSVSVPRAPSISP. A disordered region spans residues 754 to 815; it reads VPATTRAPGT…SNHSQHYANE (62 aa). The span at 765 to 777 shows a compositional bias: polar residues; the sequence is VHRSTYQNHSTET. N-linked (GlcNAc...) asparagine glycosylation is present at N772. Residues 778-799 are compositionally biased toward low complexity; it reads PSLTAAVPSSVSVPRAPSISPS. Over residues 800–812 the composition is skewed to polar residues; the sequence is TLSPATSNHSQHY. N-linked (GlcNAc...) asparagine glycosylation is present at N807. A helical transmembrane segment spans residues 827-847; sequence VIGIIVPIVVIALLCMSGYLI. Over 848–963 the chain is Cytoplasmic; sequence WRNWKRKNTK…ALSLEDDGLP (116 aa).

Belongs to the LDLR family. Homooligomer. Interacts with VLDLR. Reelin associates with two or more receptor molecules. Interacts with DAB1 and JNK-interacting proteins. Interacts with SNX17. Interacts with PCSK9. Interacts with MDK; this interaction is calcium dependent. Interacts with CLU. In terms of assembly, (Microbial infection) Interacts with Semliki Forest virus E2-E1 heterodimer; this interaction mediates viral entry to host cell. As to quaternary structure, (Microbial infection) Interacts (via class A repeats) with Eastern equine encephalitis virus spike glycoprotein E2; this interaction mediates viral entry into host cell. In terms of processing, O-glycosylated. Some alternatively spliced isoforms lack the O-linked sugar domain. Undergoes sequential, furin and gamma-secretase dependent, proteolytic processing, resulting in the extracellular release of the entire ligand-binding domain as a soluble polypeptide and in the intracellular domain (ICD) release into the cytoplasm. The gamma-secretase-dependent proteolytical processing occurs after the bulk of the extracellular domain has been shed, in a furin-dependent manner, in alternatively spliced isoforms carrying the furin cleavage site. Hypoglycosylation (mainly hypo-O-glycosylation) leads to increased extracellular cleavage, which in turn results in accelerating release of the intracellular domain (ICD) by the gamma-secretase. The resulting receptor fragment is able to inhibit Reelin signaling and in particular the Reelin-induced DAB1 phosphorylation. Post-translationally, tyrosine phosphorylated upon apoE binding. In terms of processing, ubiquitinated by MYLIP leading to degradation. In terms of tissue distribution, expressed mainly in brain and placenta. Also expressed in platelets and megakaryocytic cells. Not expressed in the liver.

It is found in the cell membrane. The protein localises to the secreted. In terms of biological role, cell surface receptor for Reelin (RELN) and apolipoprotein E (apoE)-containing ligands. LRP8 participates in transmitting the extracellular Reelin signal to intracellular signaling processes, by binding to DAB1 on its cytoplasmic tail. Reelin acts via both the VLDL receptor (VLDLR) and LRP8 to regulate DAB1 tyrosine phosphorylation and microtubule function in neurons. LRP8 has higher affinity for Reelin than VLDLR. LRP8 is thus a key component of the Reelin pathway which governs neuronal layering of the forebrain during embryonic brain development. Binds the endoplasmic reticulum resident receptor-associated protein (RAP). Binds dimers of beta 2-glycoprotein I and may be involved in the suppression of platelet aggregation in the vasculature. Highly expressed in the initial segment of the epididymis, where it affects the functional expression of clusterin and phospholipid hydroperoxide glutathione peroxidase (PHGPx), two proteins required for sperm maturation. May also function as an endocytic receptor. Not required for endocytic uptake of SEPP1 in the kidney which is mediated by LRP2. Together with its ligand, apolipoprotein E (apoE), may indirectly play a role in the suppression of the innate immune response by controlling the survival of myeloid-derived suppressor cells. Functionally, (Microbial infection) Acts as a receptor for Semliki Forest virus. This chain is Low-density lipoprotein receptor-related protein 8 (LRP8), found in Homo sapiens (Human).